A 102-amino-acid chain; its full sequence is Small ribosomal subunit protein uS10 (102 aa).

The protein belongs to the universal ribosomal protein uS10 family. In terms of assembly, part of the 30S ribosomal subunit.

Functionally, involved in the binding of tRNA to the ribosomes. This Methanosarcina mazei (strain ATCC BAA-159 / DSM 3647 / Goe1 / Go1 / JCM 11833 / OCM 88) (Methanosarcina frisia) protein is Small ribosomal subunit protein uS10.